The chain runs to 132 residues: Secreted RxLR effector protein RXLR-C22 (132 aa).

The N-terminal stretch at 1-21 (MRSLVWAVIATLIVLTPFSEA) is a signal peptide. The short motif at 56 to 74 (RKLQSDSVKKGDSTGLEER) is the RxLR-dEER element. N116 carries an N-linked (GlcNAc...) asparagine glycan.

This sequence belongs to the RxLR effector family.

Its subcellular location is the secreted. The protein resides in the host Golgi apparatus. Secreted effector that does not suppress pattern-triggered immunity (PTI) in plant host. The chain is Secreted RxLR effector protein RXLR-C22 from Plasmopara halstedii (Downy mildew of sunflower).